The following is a 717-amino-acid chain: MEEIDKSISFDGRDIRLKVGLFAPQAGGAVMIESGDTAVLVTATTAKGREGIDFLPLLVDYEERLYAGGKIPGGFLRREGRPPEKVTLTSRLIDRPLRPLFPSWLRDDIQIVATTLSMDEEVPPDVLAVTGSSVAVLLAKLPFYGPMAAVRVGLVGDDFIINPTYREVKNGDLDLVVAGSPQGVIMVEAGANQLPEQDIIEAIDFGYEAVCDLIQAQREIIAEMGIELVELEPPEVDPTLENYIKEKATEQIKEILSQYDLDKNQRDEKLDEIKDSLAESITELPEEEAVRAMVESESMLLGNAFKSVTKKLMRQQIVAEGIRVDGRKLDEVRPVSCRVGVLPSRVHGSSLFNRGLTQVMSAVTLGTPGDAQELADDLHPQDEKRYLHHYNFPPFSVGETKPLRQPGRREIGHGALAERALIPVIPKSDIFPYVIRVVSEVLSSNGSTSMGSVCASTLGLMDAGVPIVKPVSGAAMGLIKEDEEVRILTDIQGIEDFLGDMDFKVAGTDSGITALQMDMKITGLPIEVIADAIHQAKPARIHILDKMLSVLDLPRPDMSPYAPRLLSFKIDPEMIGLVIGPGGKTIKGITEETGVKIDIDDDGTVTIAAADGEKAKQACNIIQGMTKKLNPGDVYVGRVTRIIPIGAFVEVFAGKEGMVHISQIADYRVGKVEDELAIGDEVIVKVREIDSKGRVNLTRLNIHPDEAAAARANAMNY.

Residues Asp-496 and Asp-502 each coordinate Mg(2+). The 60-residue stretch at 563–622 (PRLLSFKIDPEMIGLVIGPGGKTIKGITEETGVKIDIDDDGTVTIAAADGEKAKQACNII) folds into the KH domain. The region spanning 632–700 (GDVYVGRVTR…SKGRVNLTRL (69 aa)) is the S1 motif domain.

Belongs to the polyribonucleotide nucleotidyltransferase family. Mg(2+) is required as a cofactor.

It is found in the cytoplasm. It carries out the reaction RNA(n+1) + phosphate = RNA(n) + a ribonucleoside 5'-diphosphate. In terms of biological role, involved in mRNA degradation. Catalyzes the phosphorolysis of single-stranded polyribonucleotides processively in the 3'- to 5'-direction. The sequence is that of Polyribonucleotide nucleotidyltransferase from Trichodesmium erythraeum (strain IMS101).